Reading from the N-terminus, the 623-residue chain is C2H2-type transcription factor zfpA (623 aa).

Residues 202–219 show a composition bias toward polar residues; it reads GLAVSSPMPNSGPHSRSV. Disordered stretches follow at residues 202–256 and 468–493; these read GLAV…EKGR and SNKA…NGKA. The span at 227 to 239 shows a compositional bias: low complexity; sequence SISSTNSRRSQLS. The segment at 255-276 adopts a C2H2-type zinc-finger fold; the sequence is GRCPHPDCGRVFKDLKAHMLTH.

Its subcellular location is the nucleus. Functionally, transcription factor involved in fungal growth and virulence potential. Negatively regulates antifungal drug susceptibility via transcriptional inhibition of the expressions of drug efflux pumps in a crzA-dependent way. Under the treatment of azoles, both zfpA and crzA transfer to nuclei and coregulate the expression of multidrug transporters and then keep normal drug susceptibility in fungal cells. This chain is C2H2-type transcription factor zfpA, found in Aspergillus fumigatus (strain CBS 144.89 / FGSC A1163 / CEA10) (Neosartorya fumigata).